The chain runs to 222 residues: Transcriptional regulatory protein BasR (222 aa).

The Response regulatory domain maps to Lys2–Leu116. At Asp51 the chain carries 4-aspartylphosphate. Positions Glu124–Ala218 form a DNA-binding region, ompR/PhoB-type.

Homodimer. Post-translationally, phosphorylated by BasS.

The protein resides in the cytoplasm. Member of the two-component regulatory system BasS/BasR. BasR induces the transcription of the ugd, ais, arnBCADTEF and eptA-basRS loci, all involved in resistance to polymyxin. The protein is Transcriptional regulatory protein BasR (basR) of Escherichia coli (strain K12).